The primary structure comprises 378 residues: Dof zinc finger protein 1 (378 aa).

Residues 28–38 show a composition bias toward low complexity; the sequence is GANPNPAATAP. The interval 28–79 is disordered; that stretch reads GANPNPAATAPSSVTGGALRGGGGGGAPPVAGGAGAGSTERRARPQKEKALN. Over residues 45–63 the composition is skewed to gly residues; sequence ALRGGGGGGAPPVAGGAGA. A compositionally biased stretch (basic and acidic residues) spans 66–77; the sequence is TERRARPQKEKA. The Dof-type zinc finger occupies 78 to 132; that stretch reads LNCPRCNSTNTKFCYYNNYSLQQPRYFCKTCRRYWTEGGSLRNVPVGGGSRKNKR. Zn(2+) contacts are provided by Cys80, Cys83, Cys105, and Cys108. Disordered stretches follow at residues 116 to 148, 203 to 222, and 316 to 378; these read GSLR…ASTA, SLES…NGRG, and LKPT…GTSW. Over residues 133–148 the composition is skewed to low complexity; sequence SSSSAASASPASASTA. 3 stretches are compositionally biased toward gly residues: residues 323–338, 350–361, and 369–378; these read GTGG…GVDG, AGGGGGGPGGHD, and MIGGGSGTSW.

The protein localises to the nucleus. Transcription factor that may transactivate seed storage protein genes in developing seeds. The protein is Dof zinc finger protein 1 of Oryza sativa subsp. japonica (Rice).